We begin with the raw amino-acid sequence, 359 residues long: MSTPHHILVGISGGVDSAVATCLLVQQGYRVTAVNLRLLDTLDAPYAEPTLQPSSLVVSDHPDYHIPLFSLNLSRTFRDEVMRYFNAEYLAGRTPNPCMVCNRQVKWAGLRHAAELIGANAIATGHYANRAFSDGRYRLYKGADSQKDQSYFLWMLSQKDLAHTLLPLGGLTKPEVRELAKNFGVRAAEKKESQEICFVPNDDYSTYLMSAMPELAERVADGDIVDAAGTVIGKHRGYPFYTIGQRRGLGVSAKEPLYVTALDAEQNRIHVGHKAALMSHRLLASRCNWIGMEPPSSSVELLGRIRYRDRQTACRVTPLENGQIEVVFQEPKSAITPGQAVVFYCGDEVLGGGFIEEGT.

Residues Gly10–Ser17 and Leu36 each bind ATP. Cys101 serves as the catalytic Nucleophile. Cys101 and Cys197 are joined by a disulfide. Gly125 contributes to the ATP binding site. The segment at Lys147–Gln149 is interaction with tRNA. Catalysis depends on Cys197, which acts as the Cysteine persulfide intermediate. The tract at residues Arg306–Tyr307 is interaction with tRNA.

This sequence belongs to the MnmA/TRMU family.

The protein resides in the cytoplasm. It carries out the reaction S-sulfanyl-L-cysteinyl-[protein] + uridine(34) in tRNA + AH2 + ATP = 2-thiouridine(34) in tRNA + L-cysteinyl-[protein] + A + AMP + diphosphate + H(+). Its function is as follows. Catalyzes the 2-thiolation of uridine at the wobble position (U34) of tRNA, leading to the formation of s(2)U34. The protein is tRNA-specific 2-thiouridylase MnmA of Chlorobium chlorochromatii (strain CaD3).